We begin with the raw amino-acid sequence, 236 residues long: Lectin CPL (236 aa).

Mn(2+) is bound by residues Glu8 and Asp10. Asp10, Tyr12, Asn14, and Asp19 together coordinate Ca(2+). Position 14 (Asn14) interacts with a carbohydrate. Mn(2+) is bound by residues Asp19 and His24. A carbohydrate-binding positions include 99 to 100 (VY), Asp207, and Arg227.

This sequence belongs to the leguminous lectin family. As to quaternary structure, homotetramer; dimer of dimers. In terms of processing, concanavalin A-like lectins of the Diocleinae subtribe undergo proteolytic processing referred to as circular permutation. The propeptide is split into an N-terminal and a C-terminal part, the gamma and beta chain, respectively. These are then religated in beta-gamma order to form the mature alpha chain. The beta and gamma chains can often be detected in cell extracts. Residues 1-118 of the mature chain, as displayed here, probably constitute the beta chain in the propeptide, residues 119-236 the gamma chain.

In terms of biological role, D-mannose/D-glucose-binding lectin that also binds derivative alpha-methyl-D-mannppyranoside. Has hemagglutinating activity towards rabbit erythrocytes. This is Lectin CPL from Bionia pedicellata (Camptosema pedicellatum).